A 92-amino-acid polypeptide reads, in one-letter code: Small ribosomal subunit protein uS19 (92 aa).

This sequence belongs to the universal ribosomal protein uS19 family.

In terms of biological role, protein S19 forms a complex with S13 that binds strongly to the 16S ribosomal RNA. This chain is Small ribosomal subunit protein uS19, found in Borreliella afzelii (strain PKo) (Borrelia afzelii).